The chain runs to 561 residues: Glucose-6-phosphate isomerase (561 aa).

The active-site Proton donor is the Glu-366. Active-site residues include His-397 and Lys-525.

The protein belongs to the GPI family.

The protein localises to the cytoplasm. The catalysed reaction is alpha-D-glucose 6-phosphate = beta-D-fructose 6-phosphate. Its pathway is carbohydrate degradation; glycolysis; D-glyceraldehyde 3-phosphate and glycerone phosphate from D-glucose: step 2/4. The protein is Glucose-6-phosphate isomerase (gpi) of Dictyostelium discoideum (Social amoeba).